A 454-amino-acid polypeptide reads, in one-letter code: Mitochondrial dynamics protein MID49 (454 aa).

The Mitochondrial intermembrane portion of the chain corresponds to 1 to 22 (MAEFSQKRGKRRGDEGLGSMVD). The helical transmembrane segment at 23–43 (FLLANARLVLGVGGAAVLGIA) threads the bilayer. Residues 44–454 (TLAVKRFIDR…SGLQEPEGLL (411 aa)) lie on the Cytoplasmic side of the membrane. The disordered stretch occupies residues 76-119 (ATPHLQPRPPPAALSQPVLPLAPSSSAPEGPAKSDPEVTPQLSS). The span at 88-108 (ALSQPVLPLAPSSSAPEGPAK) shows a compositional bias: low complexity.

It belongs to the MID49/MID51 family. As to quaternary structure, interacts with DNM1L.

It is found in the mitochondrion outer membrane. In terms of biological role, mitochondrial outer membrane protein which regulates mitochondrial organization. It is required for mitochondrial fission and promotes the recruitment and association of the fission mediator dynamin-related protein 1 (DNM1L) to the mitochondrial surface independently of the mitochondrial fission FIS1 and MFF proteins. Regulates DNM1L GTPase activity. The chain is Mitochondrial dynamics protein MID49 (MIEF2) from Pongo abelii (Sumatran orangutan).